The chain runs to 106 residues: Transcription and mRNA export factor SUS1 (106 aa).

This sequence belongs to the ENY2 family. Component of the nuclear pore complex (NPC)-associated TREX-2 complex (transcription and export complex 2), composed of at least SUS1, SAC3, THP1, SEM1, and CDC31. TREX-2 contains 2 SUS1 chains. The TREX-2 complex interacts with the nucleoporin NUP1. Component of the 1.8 MDa SAGA transcription coactivator-HAT complex. SAGA is built of 5 distinct domains with specialized functions. Within the SAGA complex, SUS1, SGF11, SGF73 and UBP8 form an additional subcomplex of SAGA called the DUB module (deubiquitination module). Interacts directly with THP1, SAC3, SGF11, and with the RNA polymerase II.

The protein resides in the nucleus. It localises to the nucleoplasm. It is found in the cytoplasm. Its subcellular location is the P-body. Functionally, involved in mRNA export coupled transcription activation by association with both the TREX-2 and the SAGA complexes. At the promoters, SAGA is required for recruitment of the basal transcription machinery. It influences RNA polymerase II transcriptional activity through different activities such as TBP interaction and promoter selectivity, interaction with transcription activators, and chromatin modification through histone acetylation and deubiquitination. Within the SAGA complex, participates in a subcomplex required for deubiquitination of H2B and for the maintenance of steady-state H3 methylation levels. The TREX-2 complex functions in docking export-competent ribonucleoprotein particles (mRNPs) to the nuclear entrance of the nuclear pore complex (nuclear basket). TREX-2 participates in mRNA export and accurate chromatin positioning in the nucleus by tethering genes to the nuclear periphery. May also be involved in cytoplasmic mRNA decay by interaction with components of P-bodies. The chain is Transcription and mRNA export factor SUS1 from Mycosarcoma maydis (Corn smut fungus).